Reading from the N-terminus, the 1242-residue chain is Structural polyprotein (1242 aa).

A necessary for nucleocapsid assembly and virus assembly region spans residues methionine 1–proline 36. The disordered stretch occupies residues methionine 1–methionine 104. Positions leucine 37–lysine 70 are host transcription inhibition. Positions leucine 44–leucine 51 match the Supraphysiological nuclear export signal motif. Positions alanine 66–methionine 104 are enriched in basic residues. The Nuclear localization signal motif lies at lysine 67–lysine 70. The interval lysine 83–threonine 113 is binding to the viral RNA. A ribosome-binding region spans residues proline 98 to lysine 112. Serine 110 is modified (phosphoserine). One can recognise a Peptidase S3 domain in the interval lysine 112 to tryptophan 261. Threonine 113 bears the Phosphothreonine mark. Residues histidine 138, aspartate 160, and serine 212 each act as charge relay system in the active site. The tract at residues serine 262–isoleucine 273 is functions as an uncleaved signal peptide for the precursor of protein E3/E2. The N-linked (GlcNAc...) asparagine; by host glycan is linked to asparagine 272. Residues aspartate 325 to threonine 688 are Extracellular-facing. The chain crosses the membrane as a helical span at residues valine 689 to leucine 709. Over leucine 710–alanine 744 the chain is Cytoplasmic. Residues cysteine 717, cysteine 737, and cysteine 738 are each lipidated (S-palmitoyl cysteine; by host). Residues cysteine 717–cysteine 737 are transient transmembrane before p62-6K protein processing. Topologically, residues aspartate 745–glutamine 759 are extracellular. A run of 2 helical transmembrane segments spans residues asparagine 760–leucine 780 and arginine 781–alanine 801. Topologically, residues tyrosine 802–serine 1218 are extracellular. Cystine bridges form between cysteine 850/cysteine 915, cysteine 863/cysteine 895, cysteine 864/cysteine 897, cysteine 869/cysteine 879, cysteine 1061/cysteine 1073, cysteine 1103/cysteine 1178, cysteine 1108/cysteine 1182, and cysteine 1130/cysteine 1172. The tract at residues valine 885–threonine 902 is E1 fusion peptide loop. Residues threonine 1219 to threonine 1239 traverse the membrane as a helical segment. Residues histidine 1240–histidine 1242 are Cytoplasmic-facing.

Part of a tetrameric complex composed of host CRM1, host importin alpha/beta dimer and the viral capsid; this complex blocks the receptor-mediated transport through the nuclear pore. Interacts with host phosphatase PPP1CA; this interaction dephosphorylates the capsid protein, which increases its ability to bind to the viral genome. Interacts with host karyopherin KPNA4; this interaction allows the nuclear import of the viral capsid protein. Interacts with spike glycoprotein E2. Interacts with host IRAK1; the interaction leads to inhibition of IRAK1-dependent signaling. In terms of assembly, the precursor of protein E3/E2 and E1 form a heterodimer shortly after synthesis. As to quaternary structure, the precursor of protein E3/E2 and E1 form a heterodimer shortly after synthesis. Processing of the precursor of protein E3/E2 into E2 and E3 results in a heterodimer of the spike glycoproteins E2 and E1. Spike at virion surface are constituted of three E2-E1 heterodimers. After target cell attachment and endocytosis, E1 change conformation to form homotrimers. Interacts with 6K protein. Processing of the precursor of protein E3/E2 into E2 and E3 results in a heterodimer of the spike glycoproteins E2 and E1. Spike at virion surface are constituted of three E2-E1 heterodimers. Interacts with 6K protein. In terms of assembly, interacts with spike glycoprotein E1. Interacts with spike glycoprotein E2. In terms of processing, structural polyprotein: Specific enzymatic cleavages in vivo yield mature proteins. Capsid protein is auto-cleaved during polyprotein translation, unmasking a signal peptide at the N-terminus of the precursor of E3/E2. The remaining polyprotein is then targeted to the host endoplasmic reticulum, where host signal peptidase cleaves it into pE2, 6K and E1 proteins. pE2 is further processed to mature E3 and E2 by host furin in trans-Golgi vesicle. Phosphorylated on serine and threonine residues. Post-translationally, palmitoylated via thioester bonds. These palmitoylations may induce disruption of the C-terminus transmembrane. This would result in the reorientation of E2 C-terminus from lumenal to cytoplasmic side. In terms of processing, N-glycosylated. Palmitoylated via thioester bonds.

The protein resides in the virion. It is found in the host cytoplasm. The protein localises to the host cell membrane. It localises to the host nucleus. Its subcellular location is the virion membrane. It carries out the reaction Autocatalytic release of the core protein from the N-terminus of the togavirus structural polyprotein by hydrolysis of a -Trp-|-Ser- bond.. In terms of biological role, forms an icosahedral capsid with a T=4 symmetry composed of 240 copies of the capsid protein surrounded by a lipid membrane through which penetrate 80 spikes composed of trimers of E1-E2 heterodimers. The capsid protein binds to the viral RNA genome at a site adjacent to a ribosome binding site for viral genome translation following genome release. Possesses a protease activity that results in its autocatalytic cleavage from the nascent structural protein. Following its self-cleavage, the capsid protein transiently associates with ribosomes, and within several minutes the protein binds to viral RNA and rapidly assembles into icosahedric core particles. The resulting nucleocapsid eventually associates with the cytoplasmic domain of the spike glycoprotein E2 at the cell membrane, leading to budding and formation of mature virions. In case of infection, new virions attach to target cells and after clathrin-mediated endocytosis their membrane fuses with the host endosomal membrane. This leads to the release of the nucleocapsid into the cytoplasm, followed by an uncoating event necessary for the genomic RNA to become accessible. The uncoating might be triggered by the interaction of capsid proteins with ribosomes. Binding of ribosomes would release the genomic RNA since the same region is genomic RNA-binding and ribosome-binding. Specifically inhibits interleukin-1 receptor-associated kinase 1/IRAK1-dependent signaling during viral entry, representing a means by which the alphaviruses may evade innate immune detection and activation prior to viral gene expression. Inhibits host transcription. Forms a tetrameric complex with XPO1/CRM1 and the nuclear import receptor importin. This complex blocks the central channel of host nuclear pores thereby inhibiting the receptor-mediated nuclear transport and thus the host mRNA and rRNA transcription. The inhibition of transcription is linked to a cytopathic effect on the host cell. Its function is as follows. Provides the signal sequence for the translocation of the precursor of protein E3/E2 to the host endoplasmic reticulum. Furin-cleaved E3 remains associated with spike glycoprotein E1 and mediates pH protection of the latter during the transport via the secretory pathway. After virion release from the host cell, the assembly protein E3 is gradually released in the extracellular space. Functionally, plays a role in viral attachment to target host cell, by binding to the cell receptor. Synthesized as a p62 precursor which is processed by furin at the cell membrane just before virion budding, giving rise to E2-E1 heterodimer. The p62-E1 heterodimer is stable, whereas E2-E1 is unstable and dissociate at low pH. p62 is processed at the last step, presumably to avoid E1 fusion activation before its final export to cell surface. E2 C-terminus contains a transitory transmembrane that would be disrupted by palmitoylation, resulting in reorientation of the C-terminal tail from lumenal to cytoplasmic side. This step is critical since E2 C-terminus is involved in budding by interacting with capsid proteins. This release of E2 C-terminus in cytoplasm occurs lately in protein export, and precludes premature assembly of particles at the endoplasmic reticulum membrane. Constitutive membrane protein involved in virus glycoprotein processing, cell permeabilization, and the budding of viral particles. Disrupts the calcium homeostasis of the cell, probably at the endoplasmic reticulum level. This leads to cytoplasmic calcium elevation. Because of its lipophilic properties, the 6K protein is postulated to influence the selection of lipids that interact with the transmembrane domains of the glycoproteins, which, in turn, affects the deformability of the bilayer required for the extreme curvature that occurs as budding proceeds. Present in low amount in virions, about 3% compared to viral glycoproteins. In terms of biological role, class II viral fusion protein. Fusion activity is inactive as long as E1 is bound to E2 in mature virion. After virus attachment to target cell and endocytosis, acidification of the endosome would induce dissociation of E1/E2 heterodimer and concomitant trimerization of the E1 subunits. This E1 trimer is fusion active, and promotes release of viral nucleocapsid in cytoplasm after endosome and viral membrane fusion. Efficient fusion requires the presence of cholesterol and sphingolipid in the target membrane. Fusion is optimal at levels of about 1 molecule of cholesterol per 2 molecules of phospholipids, and is specific for sterols containing a 3-beta-hydroxyl group. This is Structural polyprotein from Aedes (Human).